A 185-amino-acid polypeptide reads, in one-letter code: Pericyclase pydY (185 aa).

The protein belongs to the pericyclase pydY family.

It participates in mycotoxin biosynthesis. Its function is as follows. Pericyclase; part of the gene cluster that mediates the biosynthesis of pyrrocidines, fungal natural products containing a macrocyclic para-cyclophane connected to a decahydrofluorene ring system that show potent antibiotic activities toward Gram-negative bacteria. Within the pathway, pydY is involved in the late Diels-Alder cycloaddition step that leads to the formation of the decahydrofluorene core. The pathway begins with the PKS-NRPS pydA which, with the help of the trans-enoyl reductase pydC, synthesizes the polyketide-tyrosyl acyl thioester product which can be reductively off-loaded by the terminal reductase (R) domain in pydA. The alpha/beta hydrolase pydG is then required to catalyze the subsequent Knoevenagel condensation that affords the 3-pyrrolin-2-one ring, whereas the four proteins pydB, pydE, pydX and pydZ then function synergistically to form the cyclophane. PydB and the membrane-bound pydX and pydZ are lipid-binding proteins that can sequester and mold the pdyG product into the inverse S-shape. Binding of the medium chain reductase pydE to the complex would trigger the cascade oxidative cyclization. PydY is involved in the Diels-Alder cycloaddition that forms the decahydrofluorene core. Additional non-enzymatic hydroxylation yields pyrrocidine A2 which can be further reduced into pyrrocidine B by an endogenous reductase. The protein is Pericyclase pydY of Acremonium sp.